A 376-amino-acid chain; its full sequence is DNA double-strand break repair protein Mre11 (376 aa).

Mn(2+)-binding residues include D5, H7, D46, and D81. The Proton donor role is filled by H82. 3 residues coordinate Mn(2+): H159, H189, and H191.

This sequence belongs to the MRE11/RAD32 family. In terms of assembly, homodimer. Forms a heterotetramer composed of two Mre11 subunits and two Rad50 subunits. Mn(2+) serves as cofactor.

Nuclease activity is regulated by Rad50. Part of the Rad50/Mre11 complex, which is involved in the early steps of DNA double-strand break (DSB) repair. The complex may facilitate opening of the processed DNA ends to aid in the recruitment of HerA and NurA. Mre11 binds to DSB ends and has both double-stranded 3'-5' exonuclease activity and single-stranded endonuclease activity. This chain is DNA double-strand break repair protein Mre11, found in Thermoplasma acidophilum (strain ATCC 25905 / DSM 1728 / JCM 9062 / NBRC 15155 / AMRC-C165).